Here is a 155-residue protein sequence, read N- to C-terminus: 2-C-methyl-D-erythritol 2,4-cyclodiphosphate synthase (155 aa).

Positions 8 and 10 each coordinate a divalent metal cation. 4-CDP-2-C-methyl-D-erythritol 2-phosphate contacts are provided by residues 8–10 (DVH) and 34–35 (HS). H42 serves as a coordination point for a divalent metal cation. Residues 56 to 58 (DIG), 61 to 65 (FPDSD), 100 to 106 (AQKPKML), 132 to 135 (TTEE), F139, and K142 contribute to the 4-CDP-2-C-methyl-D-erythritol 2-phosphate site.

This sequence belongs to the IspF family. As to quaternary structure, homotrimer. Requires a divalent metal cation as cofactor.

It catalyses the reaction 4-CDP-2-C-methyl-D-erythritol 2-phosphate = 2-C-methyl-D-erythritol 2,4-cyclic diphosphate + CMP. It participates in isoprenoid biosynthesis; isopentenyl diphosphate biosynthesis via DXP pathway; isopentenyl diphosphate from 1-deoxy-D-xylulose 5-phosphate: step 4/6. Functionally, involved in the biosynthesis of isopentenyl diphosphate (IPP) and dimethylallyl diphosphate (DMAPP), two major building blocks of isoprenoid compounds. Catalyzes the conversion of 4-diphosphocytidyl-2-C-methyl-D-erythritol 2-phosphate (CDP-ME2P) to 2-C-methyl-D-erythritol 2,4-cyclodiphosphate (ME-CPP) with a corresponding release of cytidine 5-monophosphate (CMP). In Clostridium botulinum (strain Okra / Type B1), this protein is 2-C-methyl-D-erythritol 2,4-cyclodiphosphate synthase.